A 2907-amino-acid polypeptide reads, in one-letter code: Fibrillin-2 (2907 aa).

Positions 1–28 are cleaved as a signal peptide; the sequence is MGRRRRLCLQPYFVWLGCVALWAQGTDG. The disordered stretch occupies residues 26–58; sequence TDGQPQPPPPKTLRPQPPPQQVRPAVAGSEGGF. A propeptide spanning residues 29–77 is cleaved from the precursor; that stretch reads QPQPPPPKTLRPQPPPQQVRPAVAGSEGGFMGPEYRDEGAVAASRVRRR. A compositionally biased stretch (pro residues) spans 30-46; that stretch reads PQPPPPKTLRPQPPPQQ. 3 EGF-like domains span residues 111-142, 145-176, and 176-208; these read IVPICRNSCGDGFCSRPNMCTCSSGQISPTCG, SIQQCSVRCMNGGTCADDHCQCQKGYIGTYCG, and GQPVCENGCQNGGRCIGPNRCACVYGFTGPQCE. Cystine bridges form between Cys115–Cys124, Cys119–Cys130, Cys132–Cys141, Cys149–Cys159, Cys153–Cys164, Cys166–Cys175, Cys180–Cys190, Cys184–Cys196, and Cys198–Cys207. The segment at 149–359 is interaction with MFAP4; it reads CSVRCMNGGT…VTSTDGSRCI (211 aa). Positions 214–266 constitute a TB 1 domain; that stretch reads GPCFTQVNNQMCQGQLTGIVCTKTLCCATIGRAWGHPCEMCPAQPQPCRRGFI. An EGF-like 4; calcium-binding domain is found at 276–317; the sequence is DVDECQAIPGLCQGGNCINTVGSFECRCPAGHKQSETTQKCE. 6 disulfides stabilise this stretch: Cys280–Cys292, Cys287–Cys301, Cys303–Cys316, Cys322–Cys334, Cys329–Cys343, and Cys345–Cys358. Ser298 is a glycosylation site (O-linked (Glc) serine). Residues 318–359 form the EGF-like 5; calcium-binding domain; that stretch reads DIDECSVIPGVCETGDCSNTVGSYFCLCPRGFVTSTDGSRCI. Ser340 carries O-linked (Glc) serine glycosylation. A TB 2 domain is found at 364–417; it reads GTCFSGLVNGRCAQELPGRMAKAQCCCEPGRCWSIGTIPEACPVRGSEEYRRLC. An N-linked (GlcNAc...) asparagine glycan is attached at Asn485. In terms of domain architecture, EGF-like 6 spans 487–527; sequence TIDICKHHANLCLNGRCIPTVSSYRCECNMGYKQDANGDCI. Cystine bridges form between Cys491/Cys503, Cys498/Cys512, Cys514/Cys526, Cys532/Cys542, Cys537/Cys551, Cys553/Cys566, Cys572/Cys584, Cys579/Cys593, Cys595/Cys608, Cys614/Cys625, Cys620/Cys634, Cys636/Cys649, Cys655/Cys666, Cys661/Cys675, and Cys677/Cys690. An O-linked (Glc) serine glycan is attached at Ser509. The EGF-like 7; calcium-binding domain maps to 528 to 567; sequence DVDECTSNPCSNGDCVNTPGSYYCKCHAGFQRTPTKQACI. An O-linked (Glc) serine glycan is attached at Ser548. The 42-residue stretch at 568 to 609 folds into the EGF-like 8; calcium-binding domain; the sequence is DIDECIQNGVLCKNGRCVNTDGSFQCICNAGFELTTDGKNCV. O-linked (Glc) serine glycosylation is present at Ser590. In terms of domain architecture, EGF-like 9; calcium-binding spans 610 to 650; the sequence is DHDECTTTNMCLNGMCINEDGSFKCVCKPGFILAPNGRYCT. Ser631 carries an O-linked (Glc) serine glycan. The 41-residue stretch at 651–691 folds into the EGF-like 10; calcium-binding domain; that stretch reads DVDECQTPGICMNGHCINNEGSFRCDCPPGLAVGVDGRVCV. A glycan (O-linked (Glc) serine) is linked at Ser672. Positions 697–749 constitute a TB 3 domain; that stretch reads STCYGEIKKGVCVRPFPGAVTKSECCCANPDYGFGEPCQPCPAKNSAEFHGLC. The 42-residue stretch at 761-802 folds into the EGF-like 11; calcium-binding domain; the sequence is DINECALDPDICANGICENLRGSYRCNCNSGYEPDASGRNCI. Intrachain disulfides connect Cys765–Cys777, Cys772–Cys786, Cys788–Cys801, Cys807–Cys819, Cys814–Cys828, Cys830–Cys843, Cys849–Cys859, Cys854–Cys868, and Cys870–Cys883. The 42-residue stretch at 803-844 folds into the EGF-like 12; calcium-binding domain; that stretch reads DIDECLVNRLLCDNGLCRNTPGSYSCTCPPGYVFRTETETCE. Ser825 carries an O-linked (Glc) serine glycan. In terms of domain architecture, EGF-like 13; calcium-binding spans 845–883; it reads DVNECESNPCVNGACRNNLGSFHCECSPGSKLSSTGLIC. A glycan (O-linked (Glc) serine) is linked at Ser865. In terms of domain architecture, TB 4 spans 889 to 940; that stretch reads GTCWLNIQDNRCEVNINGATLKSECCATLGAAWGSPCERCELDAACPRGFAR. The 42-residue stretch at 948-989 folds into the EGF-like 14; calcium-binding domain; sequence DVNECEVFPGVCPNGRCVNSKGSFHCECPEGLTLDGTGRVCL. Intrachain disulfides connect Cys952–Cys964, Cys959–Cys973, and Cys975–Cys988. Ser970 carries an O-linked (Glc) serine glycan. In terms of domain architecture, TB 5 spans 994–1045; it reads EHCFLKWDEDECIHPVPGKFRMDACCCAVGAAWGTECEECPKPGTKEYETLC. The EGF-like 15; calcium-binding domain occupies 1066–1107; it reads DINECKAFPGMCTYGKCRNTIGSFKCRCNNGFALDMEERNCT. Disulfide bonds link Cys1070–Cys1082, Cys1077–Cys1091, Cys1093–Cys1106, Cys1112–Cys1124, Cys1119–Cys1133, Cys1135–Cys1149, Cys1155–Cys1167, Cys1162–Cys1176, Cys1178–Cys1191, Cys1197–Cys1209, Cys1204–Cys1218, Cys1220–Cys1233, Cys1239–Cys1250, Cys1246–Cys1259, Cys1261–Cys1274, Cys1280–Cys1292, Cys1287–Cys1301, Cys1303–Cys1316, Cys1322–Cys1334, Cys1329–Cys1343, Cys1345–Cys1358, Cys1364–Cys1377, Cys1371–Cys1386, Cys1388–Cys1399, Cys1405–Cys1418, Cys1412–Cys1427, Cys1429–Cys1440, Cys1446–Cys1458, Cys1453–Cys1467, Cys1469–Cys1482, Cys1488–Cys1499, Cys1494–Cys1508, Cys1510–Cys1523, Cys1529–Cys1540, Cys1535–Cys1549, and Cys1551–Cys1564. Residue Ser1088 is glycosylated (O-linked (Glc) serine). A glycan (N-linked (GlcNAc...) asparagine) is linked at Asn1105. Residues 1108-1150 form the EGF-like 16; calcium-binding domain; sequence DIDECRISPDLCGSGICVNTPGSFECECFEGYESGFMMMKNCM. An EGF-like 17; calcium-binding domain is found at 1151–1192; that stretch reads DIDECERNPLLCRGGTCVNTEGSFQCDCPLGHELSPSREDCV. The O-linked (Glc) serine glycan is linked to Ser1173. Residues 1193–1234 enclose the EGF-like 18; calcium-binding domain; sequence DINECSLSDNLCRNGKCVNMIGTYQCSCNPGYQATPDRQGCT. The O-linked (Glc) threonine glycan is linked to Thr1215. Residues 1235 to 1275 enclose the EGF-like 19; calcium-binding domain; it reads DIDECMIMNGGCDTQCTNSEGSYECSCSEGYALMPDGRSCA. A glycan (O-linked (Glc) serine) is linked at Ser1256. Residues 1276–1317 enclose the EGF-like 20; calcium-binding domain; it reads DIDECENNPDICDGGQCTNIPGEYRCLCYDGFMASMDMKTCI. In terms of domain architecture, EGF-like 21; calcium-binding spans 1318 to 1359; it reads DVNECDLNPNICMFGECENTKGSFICHCQLGYSVKKGTTGCT. O-linked (Glc) serine glycosylation occurs at Ser1340. The region spanning 1360–1400 is the EGF-like 22; calcium-binding domain; it reads DVDECEIGAHNCDMHASCLNVPGSFKCSCREGWVGNGIKCI. Residue Ser1383 is glycosylated (O-linked (Glc) serine). Residues 1401 to 1441 enclose the EGF-like 23; calcium-binding domain; it reads DLDECANGTHQCSINAQCVNTPGSYRCACSEGFTGDGFTCS. Asn1407 is a glycosylation site (N-linked (GlcNAc...) asparagine). Residues 1442–1483 enclose the EGF-like 24; calcium-binding domain; it reads DVDECAENTNLCENGQCLNVPGAYRCECEMGFTPASDSRSCQ. Positions 1484–1524 constitute an EGF-like 25; calcium-binding domain; that stretch reads DIDECSFQNICVFGTCNNLPGMFHCICDDGYELDRTGGNCT. Asn1522 carries an N-linked (GlcNAc...) asparagine glycan. Residues 1525-1565 enclose the EGF-like 26; calcium-binding domain; that stretch reads DIDECADPINCVNGLCVNTPGRYECNCPPDFQLNPTGVGCV. The TB 6 domain occupies 1570–1626; it reads GNCYLKFGPRGDGSLSCNTEVGVGVSRSSCCCSLGKAWGNPCETCPPVNSTEYYTLC. Residue Asn1618 is glycosylated (N-linked (GlcNAc...) asparagine). In terms of domain architecture, EGF-like 27; calcium-binding spans 1643-1684; the sequence is DIDECQELPGLCQGGNCINTFGSFQCECPQGYYLSEETRICE. Disulfide bonds link Cys1647/Cys1659, Cys1654/Cys1668, Cys1670/Cys1683, Cys1689/Cys1701, Cys1696/Cys1710, and Cys1712/Cys1725. A glycan (O-linked (Glc) serine) is linked at Ser1665. One can recognise an EGF-like 28; calcium-binding domain in the interval 1685-1726; that stretch reads DIDECFAHPGVCGPGTCYNTLGNYTCICPPEYMQVNGGHNCM. N-linked (GlcNAc...) asparagine glycosylation occurs at Asn1707. The segment at 1728 to 2164 is interaction with MFAP4; sequence MRKSFCYRSY…VPSLHDTRED (437 aa). In terms of domain architecture, TB 7 spans 1731 to 1784; sequence SFCYRSYNGTTCENELPFNVTKRMCCCTYNVGKAWNKPCEPCPTPGTADFKTIC. Residues Asn1738 and Asn1749 are each glycosylated (N-linked (GlcNAc...) asparagine). An EGF-like 29; calcium-binding domain is found at 1801–1842; the sequence is DIDECKEIPGICANGVCINQIGSFRCECPTGFSYNDLLLVCE. Intrachain disulfides connect Cys1805–Cys1817, Cys1812–Cys1826, Cys1828–Cys1841, Cys1847–Cys1860, Cys1854–Cys1869, Cys1871–Cys1883, Cys1889–Cys1901, Cys1896–Cys1910, Cys1912–Cys1925, Cys1931–Cys1941, Cys1936–Cys1950, Cys1952–Cys1964, Cys1970–Cys1983, Cys1978–Cys1992, Cys1994–Cys2007, Cys2013–Cys2025, Cys2020–Cys2034, Cys2036–Cys2047, Cys2053–Cys2065, Cys2060–Cys2074, and Cys2076–Cys2089. Residues 1843 to 1884 form the EGF-like 30; calcium-binding domain; that stretch reads DIDECSNGDNLCQRNADCINSPGSYRCECAAGFKLSPNGACV. Ser1866 is a glycosylation site (O-linked (Glc) serine). The 42-residue stretch at 1885–1926 folds into the EGF-like 31; calcium-binding domain; that stretch reads DRNECLEIPNVCSHGLCVDLQGSYQCICNNGFKASQDQTMCM. In terms of domain architecture, EGF-like 32; calcium-binding spans 1927-1965; it reads DVDECERHPCGNGTCKNTVGSYNCLCYPGFELTHNNDCL. Asn1938 is a glycosylation site (N-linked (GlcNAc...) asparagine). O-linked (Glc) serine glycosylation is present at Ser1947. The EGF-like 33; calcium-binding domain occupies 1966-2008; the sequence is DIDECSSFFGQVCRNGRCFNEIGSFKCLCNEGYELTPDGKNCI. O-linked (Glc) serine glycosylation occurs at Ser1989. One can recognise an EGF-like 34; calcium-binding domain in the interval 2009 to 2048; it reads DTNECVALPGSCSPGTCQNLEGSFRCICPPGYEVRSENCI. The EGF-like 35; calcium-binding domain occupies 2049 to 2090; the sequence is DINECDEDPNICLFGSCTNTPGGFQCICPPGFVLSDNGRRCF. A TB 8 domain is found at 2095-2148; sequence SFCFTNFENGKCSVPKAFNTTKAKCCCSKMPGEGWGDPCELCPKDDEVAFQDLC. Asn2113 carries N-linked (GlcNAc...) asparagine glycosylation. The EGF-like 36; calcium-binding domain maps to 2164–2205; the sequence is DVNECLESPGICSNGQCINTDGSFRCECPMGYNLDYTGVRCV. 15 disulfides stabilise this stretch: Cys2168/Cys2180, Cys2175/Cys2189, Cys2191/Cys2204, Cys2210/Cys2221, Cys2216/Cys2230, Cys2232/Cys2244, Cys2250/Cys2261, Cys2257/Cys2270, Cys2272/Cys2285, Cys2291/Cys2305, Cys2298/Cys2314, Cys2316/Cys2329, Cys2335/Cys2347, Cys2342/Cys2356, and Cys2358/Cys2371. Residue Ser2186 is glycosylated (O-linked (Glc) serine). The 40-residue stretch at 2206 to 2245 folds into the EGF-like 37; calcium-binding domain; that stretch reads DTDECSIGNPCGNGTCTNVIGSFECTCNEGFEPGPMMNCE. An N-linked (GlcNAc...) asparagine glycan is attached at Asn2218. The EGF-like 38; calcium-binding domain occupies 2246–2286; that stretch reads DINECAQNPLLCAFRCMNTFGSYECTCPVGYALREDQKMCK. Ser2267 carries O-linked (Glc) serine glycosylation. The region spanning 2287–2330 is the EGF-like 39; calcium-binding domain; it reads DLDECAEGLHDCESRGMMCKNLIGTFMCICPPGMARRPDGEGCV. Residues 2331–2372 enclose the EGF-like 40; calcium-binding domain; that stretch reads DENECRTKPGICENGRCVNIIGSYRCECNEGFQSSSSGTECL. A glycan (O-linked (Glc) serine) is linked at Ser2353. Positions 2377 to 2430 constitute a TB 9 domain; that stretch reads GLCFAEVLQTMCQMASSSRNLVTKSECCCDGGRGWGHQCELCPLPGTAQYKKIC. An EGF-like 41; calcium-binding domain is found at 2442-2483; it reads DIDECKVMPSLCTNGQCVNTMGSFRCFCKVGYTTDISGTACV. Intrachain disulfides connect Cys2446/Cys2458, Cys2453/Cys2467, Cys2469/Cys2482, Cys2488/Cys2499, Cys2495/Cys2508, Cys2510/Cys2523, Cys2529/Cys2540, Cys2536/Cys2549, Cys2551/Cys2562, Cys2568/Cys2581, Cys2575/Cys2590, Cys2592/Cys2605, Cys2611/Cys2621, Cys2617/Cys2630, Cys2632/Cys2645, Cys2651/Cys2662, Cys2657/Cys2671, Cys2673/Cys2686, Cys2692/Cys2703, Cys2699/Cys2712, and Cys2714/Cys2726. Residue Ser2464 is glycosylated (O-linked (Glc) serine). The region spanning 2484 to 2524 is the EGF-like 42; calcium-binding domain; sequence DLDECSQSPKPCNFICKNTKGSYQCSCPRGYVLQEDGKTCK. The O-linked (Glc) serine glycan is linked to Ser2505. The region spanning 2525-2563 is the EGF-like 43; calcium-binding domain; the sequence is DLDECQTKQHNCQFLCVNTLGGFTCKCPPGFTQHHTACI. The EGF-like 44; calcium-binding domain occupies 2564–2606; sequence DNNECGSQPSLCGAKGICQNTPGSFSCECQRGFSLDASGLNCE. The O-linked (Glc) serine glycan is linked to Ser2587. An EGF-like 45; calcium-binding domain is found at 2607 to 2646; it reads DVDECDGNHRCQHGCQNILGGYRCGCPQGYVQHYQWNQCV. Residues 2647-2687 enclose the EGF-like 46; calcium-binding domain; it reads DENECSNPGACGSASCYNTLGSYKCACPSGFSFDQFSSACH. Ser2668 carries O-linked (Glc) serine glycosylation. One can recognise an EGF-like 47; calcium-binding domain in the interval 2688–2727; the sequence is DVNECSSSKNPCSYGCSNTEGGYLCGCPPGYFRVGQGHCV. Asn2803 is a glycosylation site (N-linked (GlcNAc...) asparagine).

The protein belongs to the fibrillin family. Interacts with BMP2, BMP4, BMP7, BMP10 and GDF5. Interacts with MFAP2 and MFAP5. Interacts with ADAMTSL5. Interacts with MFAP4. In terms of processing, N-glycosylated. O-glycosylated on serine residues by POGLUT2 and POGLUT3. In terms of tissue distribution, widely expressed.

Its subcellular location is the secreted. The protein localises to the extracellular space. It is found in the extracellular matrix. In terms of biological role, fibrillins are structural components of 10-12 nm extracellular calcium-binding microfibrils, which occur either in association with elastin or in elastin-free bundles. Fibrillin-2-containing microfibrils regulate the early process of elastic fiber assembly. Regulates osteoblast maturation by controlling TGF-beta bioavailability and calibrating TGF-beta and BMP levels, respectively. Its function is as follows. Hormone secreted by trophoblasts that promotes trophoblast invasiveness. Has glucogenic activity: is able to increase plasma glucose levels. In Mus musculus (Mouse), this protein is Fibrillin-2.